The sequence spans 185 residues: Elongation factor P (185 aa).

This sequence belongs to the elongation factor P family.

The protein localises to the cytoplasm. It functions in the pathway protein biosynthesis; polypeptide chain elongation. Its function is as follows. Involved in peptide bond synthesis. Stimulates efficient translation and peptide-bond synthesis on native or reconstituted 70S ribosomes in vitro. Probably functions indirectly by altering the affinity of the ribosome for aminoacyl-tRNA, thus increasing their reactivity as acceptors for peptidyl transferase. This is Elongation factor P from Trichodesmium erythraeum (strain IMS101).